Consider the following 197-residue polypeptide: Interleukin-17C (197 aa).

The N-terminal stretch at 1 to 18 (MTLLPGLLFLTWLHTCLA) is a signal peptide. 2 disulfide bridges follow: Cys129–Cys189 and Cys134–Cys191.

Belongs to the IL-17 family. As to quaternary structure, binds to a heterodimer formed by IL17RA and IL17RE.

The protein localises to the secreted. In terms of biological role, cytokine that plays a crucial role in innate immunity of the epithelium, including to intestinal bacterial pathogens, in an autocrine manner. Stimulates the production of antibacterial peptides and pro-inflammatory molecules for host defense by signaling through the NF-kappa-B and MAPK pathways. Acts synergically with IL22 in inducing the expression of antibacterial peptides, including S100A8, S100A9, REG3A and REG3G. Synergy is also observed with TNF and IL1B in inducing DEFB2 from keratinocytes. Depending on the type of insult, may have both protective and pathogenic properties, either by maintaining epithelial homeostasis after an inflammatory challenge or by promoting inflammatory phenotype. Enhanced IL17C/IL17RE signaling may also lead to greater susceptibility to autoimmune diseases. The sequence is that of Interleukin-17C (IL17C) from Homo sapiens (Human).